Reading from the N-terminus, the 615-residue chain is Dihydroxy-acid dehydratase (615 aa).

D83 is a Mg(2+) binding site. Residue C124 coordinates [2Fe-2S] cluster. Residues D125 and K126 each coordinate Mg(2+). Position 126 is an N6-carboxylysine (K126). C199 provides a ligand contact to [2Fe-2S] cluster. E495 is a Mg(2+) binding site. S521 (proton acceptor) is an active-site residue.

It belongs to the IlvD/Edd family. Homodimer. [2Fe-2S] cluster serves as cofactor. It depends on Mg(2+) as a cofactor.

It catalyses the reaction (2R)-2,3-dihydroxy-3-methylbutanoate = 3-methyl-2-oxobutanoate + H2O. The catalysed reaction is (2R,3R)-2,3-dihydroxy-3-methylpentanoate = (S)-3-methyl-2-oxopentanoate + H2O. Its pathway is amino-acid biosynthesis; L-isoleucine biosynthesis; L-isoleucine from 2-oxobutanoate: step 3/4. It functions in the pathway amino-acid biosynthesis; L-valine biosynthesis; L-valine from pyruvate: step 3/4. Its function is as follows. Functions in the biosynthesis of branched-chain amino acids. Catalyzes the dehydration of (2R,3R)-2,3-dihydroxy-3-methylpentanoate (2,3-dihydroxy-3-methylvalerate) into 2-oxo-3-methylpentanoate (2-oxo-3-methylvalerate) and of (2R)-2,3-dihydroxy-3-methylbutanoate (2,3-dihydroxyisovalerate) into 2-oxo-3-methylbutanoate (2-oxoisovalerate), the penultimate precursor to L-isoleucine and L-valine, respectively. This chain is Dihydroxy-acid dehydratase, found in Corynebacterium jeikeium (strain K411).